Consider the following 556-residue polypeptide: MAETEKERLLKQLAQLKNERTSFESHWLDLSDFINPRGSRFLTSDVNRDDRRNTKIVDPTGSMAQRILSSGMMSGITSPARPWFKLATPDPDMMDYGPVKIWLEVVQRRMNEVFNKSNLYQSLPVMYASLGTFGTGAMAVMEDDQDVIRTMPFPIGSYYLANSPRGSVDTCIRQFSMTVRQMVQEFGLDNVSTSVKGMWENGTYETWVEVNHCITPNVNRDSGKMDSKNKPYRSVYFESGGDSDKLLRESGFDEFPILAPRWEVNGEDVYASSCPGMLALGQVKALQVEQKRKAQLIDKATNPPMVAPTSLKNQRVSLLPGDVTYLDVISGQDGFKPAYLVNPNTADLLADIQDTRQTINSAYFVDLFMMLQNINTRSMPVEAVIEMKEEKLLMLGPVLERLNDEALNPLIDRVFSIMARKNMLPEPPDVLQGMPLRIEYISVMAQAQKSIGLTSLSQTVGFIGQLAQFKPEALDKLDVDQAIDAFSEMSGVSPTVIVPQEQVQGIREERAKQAQAAQAMAMGQAAAQGAKTLSETQTSDPSALTAIANAAGAPQQ.

The interval 527–556 (AQGAKTLSETQTSDPSALTAIANAAGAPQQ) is disordered. The segment covering 533–542 (LSETQTSDPS) has biased composition (polar residues).

This sequence belongs to the podoviridae head-to-tail connector protein family. Homododecamer.

It localises to the virion. Forms the portal vertex of the capsid. This portal plays critical roles in head assembly, genome packaging, neck/tail attachment, and genome ejection. The portal protein multimerizes as a single ring-shaped homododecamer arranged around a central channel. The chain is Portal protein from Salmonella phage epsilon15.